A 152-amino-acid polypeptide reads, in one-letter code: uncharacterized protein (152 aa).

The 127-residue stretch at 7 to 133 (PALSPHLVVD…FGHHWSLGQP (127 aa)) folds into the VOC domain.

This is an uncharacterized protein from Mycobacterium bovis (strain ATCC BAA-935 / AF2122/97).